Consider the following 282-residue polypeptide: MCFLLLCLTLTLAGTGAVPTGPSIEIHSRIIGGWECDKHSQPWQALLTFTRKHNSVCGGVLVHSQWVLTAAHCIGDNYKVLLGLHDRSSEESTVQEARVSARFPHPLYNMTLLNLLLSHKMNLTFFYKTFLGADFSHDLMLLRLDQPVQLTDAVQVLDLPTQEPQVGSTCHVSGWGRTSQNYENSFVLPEKLQCVEFTLLSNNECSHAHMFKVTEAMLCAGHMEGGKDSCVGDSGGPLICDGVFQGIASWGSSPCGQQGRPGIYVKVFLYISWIQETIKAHS.

Residues 1-17 (MCFLLLCLTLTLAGTGA) form the signal peptide. The propeptide at 18–29 (VPTGPSIEIHSR) is activation peptide. A Peptidase S1 domain is found at 30-279 (IIGGWECDKH…YISWIQETIK (250 aa)). 5 disulfide bridges follow: Cys36/Cys194, Cys57/Cys73, Cys170/Cys240, Cys205/Cys219, and Cys230/Cys255. His72 (charge relay system) is an active-site residue. The O-linked (GalNAc...) serine glycan is linked to Ser100. N-linked (GlcNAc...) asparagine glycosylation is found at Asn109 and Asn122. The active-site Charge relay system is Asp138. Catalysis depends on Ser234, which acts as the Charge relay system.

It belongs to the peptidase S1 family. Kallikrein subfamily. As to expression, submaxillary and sublingual salivary glands.

The protein localises to the secreted. Strongly inhibited by aprotinin, moderately inhibited by secretory leukoprotease inhibitor, the Kunitz-type soybean trypsin inhibitor, and leupeptin, and not inhibited by urinary trypsin inhibitor or alpha-1 protease inhibitor. Its function is as follows. Has kallikrein-like activity, converts kininogens to kinins, and has dilatory effects on the blood vessel walls. Shows highest activity toward Pro-Phe-Arg-MCA and Boc-Val-Leu-Lys-MCA in vitro. Has preference for Arg and Lys in position P1 and hydrophobic residues in position P2. In Blarina brevicauda (Northern short-tailed shrew), this protein is Blarina toxin (BTX).